The primary structure comprises 513 residues: NAD(P)H-quinone oxidoreductase subunit 2 (513 aa).

The next 14 membrane-spanning stretches (helical) occupy residues 15–35, 43–63, 80–100, 110–130, 133–153, 168–188, 211–231, 245–265, 281–301, 307–327, 335–355, 379–399, 401–421, and 467–487; these read VIWPEGILIITLMVILIGDLI, WLPYVAIAGLLAAVVALYFTW, LSIVFRAIIALSTASTVLMSI, LAEFLAIMLTATLGGMFLSGA, LVMIFISLEMLSISSYLMTGY, LLIGASSSAIFLYGVSLLYGL, LALAIALVFVIAGIAFKISAV, PTPVVAFLSVGSKAAGFALAI, FIFIALAILSMILGNVVALAQ, MLAYSSIGQAGFVMIGLTAGT, IFYLLIYLFMNLGAFACVILF, LCLSICLLSLGGIPPLAGFFG, IYLFWAGWQAGLYALVLVGLV, and VGIVLSLVATSLAGILSNPLF.

The protein belongs to the complex I subunit 2 family. NDH-1 can be composed of about 15 different subunits; different subcomplexes with different compositions have been identified which probably have different functions.

It localises to the cellular thylakoid membrane. It catalyses the reaction a plastoquinone + NADH + (n+1) H(+)(in) = a plastoquinol + NAD(+) + n H(+)(out). The enzyme catalyses a plastoquinone + NADPH + (n+1) H(+)(in) = a plastoquinol + NADP(+) + n H(+)(out). Its function is as follows. NDH-1 shuttles electrons from an unknown electron donor, via FMN and iron-sulfur (Fe-S) centers, to quinones in the respiratory and/or the photosynthetic chain. The immediate electron acceptor for the enzyme in this species is believed to be plastoquinone. Couples the redox reaction to proton translocation, and thus conserves the redox energy in a proton gradient. Cyanobacterial NDH-1 also plays a role in inorganic carbon-concentration. The chain is NAD(P)H-quinone oxidoreductase subunit 2 from Microcystis aeruginosa (strain NIES-843 / IAM M-2473).